The sequence spans 481 residues: UDP-N-acetylmuramoyl-L-alanyl-D-glutamate--L-lysine ligase (481 aa).

Residue S42 coordinates UDP-N-acetyl-alpha-D-muramoyl-L-alanyl-D-glutamate. ATP is bound at residue 118–124; sequence GTKGKTT. Residues 160 to 161, S187, and R195 contribute to the UDP-N-acetyl-alpha-D-muramoyl-L-alanyl-D-glutamate site; that span reads TT. An N6-carboxylysine modification is found at K229. Positions 404–407 match the L-lysine recognition motif motif; sequence DDPN.

This sequence belongs to the MurCDEF family. MurE subfamily. In terms of processing, carboxylation is probably crucial for Mg(2+) binding and, consequently, for the gamma-phosphate positioning of ATP.

The protein localises to the cytoplasm. The catalysed reaction is UDP-N-acetyl-alpha-D-muramoyl-L-alanyl-D-glutamate + L-lysine + ATP = UDP-N-acetyl-alpha-D-muramoyl-L-alanyl-gamma-D-glutamyl-L-lysine + ADP + phosphate + H(+). It participates in cell wall biogenesis; peptidoglycan biosynthesis. Functionally, catalyzes the addition of L-lysine to the nucleotide precursor UDP-N-acetylmuramoyl-L-alanyl-D-glutamate (UMAG) in the biosynthesis of bacterial cell-wall peptidoglycan. In Streptococcus sanguinis (strain SK36), this protein is UDP-N-acetylmuramoyl-L-alanyl-D-glutamate--L-lysine ligase.